Reading from the N-terminus, the 156-residue chain is Cell division protein SepF (156 aa).

Positions 23 to 36 (SYEKEQTDMKKQQD) are enriched in basic and acidic residues. Residues 23-50 (SYEKEQTDMKKQQDPPEQQDVTFPKAQP) form a disordered region.

This sequence belongs to the SepF family. Homodimer. Interacts with FtsZ.

The protein localises to the cytoplasm. Its function is as follows. Cell division protein that is part of the divisome complex and is recruited early to the Z-ring. Probably stimulates Z-ring formation, perhaps through the cross-linking of FtsZ protofilaments. Its function overlaps with FtsA. The chain is Cell division protein SepF from Bacillus thuringiensis (strain Al Hakam).